Reading from the N-terminus, the 430-residue chain is tRNA(Ile)-lysidine synthase (430 aa).

21–26 (SGGLDS) lines the ATP pocket.

This sequence belongs to the tRNA(Ile)-lysidine synthase family.

It is found in the cytoplasm. The enzyme catalyses cytidine(34) in tRNA(Ile2) + L-lysine + ATP = lysidine(34) in tRNA(Ile2) + AMP + diphosphate + H(+). Its function is as follows. Ligates lysine onto the cytidine present at position 34 of the AUA codon-specific tRNA(Ile) that contains the anticodon CAU, in an ATP-dependent manner. Cytidine is converted to lysidine, thus changing the amino acid specificity of the tRNA from methionine to isoleucine. The polypeptide is tRNA(Ile)-lysidine synthase (Salmonella schwarzengrund (strain CVM19633)).